Here is a 126-residue protein sequence, read N- to C-terminus: 13 kDa ribonucleoprotein-associated protein (126 aa).

Belongs to the eukaryotic ribosomal protein eL8 family. As to quaternary structure, component of the U3 snoRNP particle. Binds to the C'/D and B/C motifs in U3 snoRNA. Component of the 25S U4/U6.U5 tri-snRNP particle, a subcomplex of the spliceosome. Binds to the 5' stem-loop of U4 snRNA.

Its subcellular location is the nucleus. It is found in the nucleolus. Common component of the spliceosome and rRNA processing machinery. In association with the spliceosomal U4/U6.U5 tri-snRNP particle, required for splicing of pre-mRNA. In association with box C/D snoRNPs, required for processing of pre-ribosomal RNA (rRNA) and site-specific 2'-O-methylation of substrate RNAs. Essential for the accumulation and stability of U4 snRNA, U6 snRNA, and box C/D snoRNAs. The chain is 13 kDa ribonucleoprotein-associated protein (SNU13) from Candida albicans (strain SC5314 / ATCC MYA-2876) (Yeast).